We begin with the raw amino-acid sequence, 157 residues long: SsrA-binding protein (157 aa).

Over residues 138 to 151 (ATEAKRDWGREKQR) the composition is skewed to basic and acidic residues. The tract at residues 138 to 157 (ATEAKRDWGREKQRLLKQHS) is disordered.

This sequence belongs to the SmpB family.

Its subcellular location is the cytoplasm. Functionally, required for rescue of stalled ribosomes mediated by trans-translation. Binds to transfer-messenger RNA (tmRNA), required for stable association of tmRNA with ribosomes. tmRNA and SmpB together mimic tRNA shape, replacing the anticodon stem-loop with SmpB. tmRNA is encoded by the ssrA gene; the 2 termini fold to resemble tRNA(Ala) and it encodes a 'tag peptide', a short internal open reading frame. During trans-translation Ala-aminoacylated tmRNA acts like a tRNA, entering the A-site of stalled ribosomes, displacing the stalled mRNA. The ribosome then switches to translate the ORF on the tmRNA; the nascent peptide is terminated with the 'tag peptide' encoded by the tmRNA and targeted for degradation. The ribosome is freed to recommence translation, which seems to be the essential function of trans-translation. The sequence is that of SsrA-binding protein from Cereibacter sphaeroides (strain ATCC 17025 / ATH 2.4.3) (Rhodobacter sphaeroides).